Here is a 119-residue protein sequence, read N- to C-terminus: ARKHVQELLKTFRRIDFDETRKSVYLQSAKFGVQSQLREPLTKKVLNYWDDVKLSKTCLDRMVTKVNDVKETFYAGFSYACESHNQYSVDCLEAAKPSYLTALGEIRGETEKCLTTRLK.

Cystine bridges form between C58/C113 and C81/C91.

It is found in the secreted. With respect to regulation, the activity is increased in the presence of host properdin (CFP). Salivary protein that inhibits the alternative pathway of complement system activation in the host while having no inhibitory effect on the classical pathway. Inhibits activity of activated host C3-convertase complex C3bBb (C3-CFB). Enhances accumulation of C3bBb on immobilized properdin. This Anopheles freeborni (Western malaria mosquito) protein is gSG7 salivary protein.